We begin with the raw amino-acid sequence, 573 residues long: Sulfite reductase [NADPH] hemoprotein beta-component (573 aa).

[4Fe-4S] cluster contacts are provided by C438, C444, C483, and C487. C487 lines the siroheme pocket.

It belongs to the nitrite and sulfite reductase 4Fe-4S domain family. Alpha(8)-beta(8). The alpha component is a flavoprotein, the beta component is a hemoprotein. Siroheme serves as cofactor. It depends on [4Fe-4S] cluster as a cofactor.

It carries out the reaction hydrogen sulfide + 3 NADP(+) + 3 H2O = sulfite + 3 NADPH + 4 H(+). It functions in the pathway sulfur metabolism; hydrogen sulfide biosynthesis; hydrogen sulfide from sulfite (NADPH route): step 1/1. Its function is as follows. Component of the sulfite reductase complex that catalyzes the 6-electron reduction of sulfite to sulfide. This is one of several activities required for the biosynthesis of L-cysteine from sulfate. In Nitrosomonas europaea (strain ATCC 19718 / CIP 103999 / KCTC 2705 / NBRC 14298), this protein is Sulfite reductase [NADPH] hemoprotein beta-component.